Consider the following 628-residue polypeptide: 1-deoxy-D-xylulose-5-phosphate synthase (628 aa).

Residues histidine 77 and 118–120 (GHS) contribute to the thiamine diphosphate site. Aspartate 150 is a Mg(2+) binding site. Residues 151–152 (GA), asparagine 180, tyrosine 288, and glutamate 369 contribute to the thiamine diphosphate site. Asparagine 180 lines the Mg(2+) pocket.

The protein belongs to the transketolase family. DXPS subfamily. As to quaternary structure, homodimer. The cofactor is Mg(2+). Thiamine diphosphate is required as a cofactor.

The enzyme catalyses D-glyceraldehyde 3-phosphate + pyruvate + H(+) = 1-deoxy-D-xylulose 5-phosphate + CO2. The protein operates within metabolic intermediate biosynthesis; 1-deoxy-D-xylulose 5-phosphate biosynthesis; 1-deoxy-D-xylulose 5-phosphate from D-glyceraldehyde 3-phosphate and pyruvate: step 1/1. Catalyzes the acyloin condensation reaction between C atoms 2 and 3 of pyruvate and glyceraldehyde 3-phosphate to yield 1-deoxy-D-xylulose-5-phosphate (DXP). The sequence is that of 1-deoxy-D-xylulose-5-phosphate synthase from Aquifex aeolicus (strain VF5).